Consider the following 196-residue polypeptide: Probable thymidylate kinase (196 aa).

An ATP-binding site is contributed by 7-14 (GIDGAGKT).

The protein belongs to the thymidylate kinase family.

The enzyme catalyses dTMP + ATP = dTDP + ADP. The polypeptide is Probable thymidylate kinase (tmk) (Archaeoglobus fulgidus (strain ATCC 49558 / DSM 4304 / JCM 9628 / NBRC 100126 / VC-16)).